The primary structure comprises 246 residues: tRNA (cytidine/uridine-2'-O-)-methyltransferase TrmJ (246 aa).

S-adenosyl-L-methionine contacts are provided by residues 79-81 (TSA), glycine 114, isoleucine 134, and 141-143 (SSL).

It belongs to the class IV-like SAM-binding methyltransferase superfamily. RNA methyltransferase TrmH family. As to quaternary structure, homodimer.

It is found in the cytoplasm. It carries out the reaction cytidine(32) in tRNA + S-adenosyl-L-methionine = 2'-O-methylcytidine(32) in tRNA + S-adenosyl-L-homocysteine + H(+). It catalyses the reaction uridine(32) in tRNA + S-adenosyl-L-methionine = 2'-O-methyluridine(32) in tRNA + S-adenosyl-L-homocysteine + H(+). Its function is as follows. Catalyzes the formation of 2'O-methylated cytidine (Cm32) or 2'O-methylated uridine (Um32) at position 32 in tRNA. This Escherichia coli O1:K1 / APEC protein is tRNA (cytidine/uridine-2'-O-)-methyltransferase TrmJ (trmJ).